Here is a 452-residue protein sequence, read N- to C-terminus: Probable ECA polymerase (452 aa).

The next 11 helical transmembrane spans lie at 6 to 26, 37 to 57, 63 to 83, 118 to 138, 155 to 175, 181 to 201, 207 to 227, 228 to 248, 341 to 361, 378 to 398, and 410 to 430; these read FSGL…LTWF, VFFS…TSVL, VGVA…CFYG, VILM…NGFL, GVAL…VYFL, AWLF…MIVG, IIIA…ISLW, MLVA…LKRY, LVVM…GLII, YKAA…IVLA, and VFFL…FWLF.

This sequence belongs to the WzyE family. In terms of assembly, probably part of a complex composed of WzxE, WzyE and WzzE.

The protein resides in the cell inner membrane. It functions in the pathway bacterial outer membrane biogenesis; enterobacterial common antigen biosynthesis. Functionally, probably involved in the polymerization of enterobacterial common antigen (ECA) trisaccharide repeat units. This is Probable ECA polymerase from Salmonella agona (strain SL483).